The chain runs to 399 residues: Formate-dependent phosphoribosylglycinamide formyltransferase (399 aa).

N(1)-(5-phospho-beta-D-ribosyl)glycinamide is bound by residues E22–L23 and E82. ATP-binding positions include R115, K157, S162–Q167, E197–V200, and E205. The ATP-grasp domain occupies R120–L315. E274 and E286 together coordinate Mg(2+). Residues D293, K362, and R369 to R370 each bind N(1)-(5-phospho-beta-D-ribosyl)glycinamide.

This sequence belongs to the PurK/PurT family. As to quaternary structure, homodimer.

The catalysed reaction is N(1)-(5-phospho-beta-D-ribosyl)glycinamide + formate + ATP = N(2)-formyl-N(1)-(5-phospho-beta-D-ribosyl)glycinamide + ADP + phosphate + H(+). The protein operates within purine metabolism; IMP biosynthesis via de novo pathway; N(2)-formyl-N(1)-(5-phospho-D-ribosyl)glycinamide from N(1)-(5-phospho-D-ribosyl)glycinamide (formate route): step 1/1. Its function is as follows. Involved in the de novo purine biosynthesis. Catalyzes the transfer of formate to 5-phospho-ribosyl-glycinamide (GAR), producing 5-phospho-ribosyl-N-formylglycinamide (FGAR). Formate is provided by PurU via hydrolysis of 10-formyl-tetrahydrofolate. This is Formate-dependent phosphoribosylglycinamide formyltransferase from Thioalkalivibrio sulfidiphilus (strain HL-EbGR7).